We begin with the raw amino-acid sequence, 205 residues long: Golgi apparatus membrane protein TVP23 homolog B (205 aa).

Methionine 1 carries the N-acetylmethionine modification. A compositionally biased stretch (acidic residues) spans 1–21 (MLSQDSNDDTEDVSLFDAEEE). The tract at residues 1–27 (MLSQDSNDDTEDVSLFDAEEETTNRPR) is disordered. A run of 4 helical transmembrane segments spans residues 34 to 53 (PVAS…VYLL), 54 to 72 (CELL…ILLL), 126 to 146 (IFWL…FSAL), and 152 to 172 (KWLA…YGYI).

This sequence belongs to the TVP23 family.

It is found in the membrane. The polypeptide is Golgi apparatus membrane protein TVP23 homolog B (Tvp23b) (Mus musculus (Mouse)).